Consider the following 623-residue polypeptide: Putative pentatricopeptide repeat-containing protein At3g11460, mitochondrial (623 aa).

Residues 1-35 constitute a mitochondrion transit peptide; that stretch reads MIVVTSFVRNSAVAAVASTPWNVRLRELAYQSLFS. 12 PPR repeats span residues 17–51, 52–86, 87–117, 120–154, 155–189, 190–220, 221–255, 256–290, 291–321, 322–356, 357–387, and 393–423; these read ASTP…GSSP, DAFS…GCET, EPFV…NPQS, LSVC…GVSV, DSVT…GLDS, EVAV…MPVK, GLIT…GVCP, DPFT…GFVP, NVFV…MPVK, SLVS…GIRP, DGAV…MKRE, and GPEH…MPVE. Residues 428–503 are type E motif; it reads VWGALLGACK…KPGYSYVEHK (76 aa). The segment at 504–535 is type E(+) motif; it reads GRVHLFLAGDRSHEQTEEVHRMLDELETSVME. The tract at residues 536–623 is type DYW motif; that stretch reads LAGNMDCDRG…DGVCSCKDYW (88 aa).

This sequence belongs to the PPR family. PCMP-H subfamily. As to quaternary structure, interacts with MORF8/RIP1.

The protein resides in the mitochondrion. In terms of biological role, involved in C-to-U editing of mitochondrial RNA. Required specifically for editing the mitochondrial NAD2 transcript. This is Putative pentatricopeptide repeat-containing protein At3g11460, mitochondrial (PCMP-H52) from Arabidopsis thaliana (Mouse-ear cress).